A 129-amino-acid polypeptide reads, in one-letter code: 3-aminoacrylate deaminase RutC (129 aa).

Belongs to the RutC family.

It carries out the reaction (Z)-3-aminoacrylate + H2O + H(+) = 3-oxopropanoate + NH4(+). In terms of biological role, involved in pyrimidine catabolism. Catalyzes the deamination of 3-aminoacrylate to malonic semialdehyde, a reaction that can also occur spontaneously. RutC may facilitate the reaction and modulate the metabolic fitness, rather than catalyzing essential functions. The polypeptide is 3-aminoacrylate deaminase RutC (Yersinia enterocolitica serotype O:8 / biotype 1B (strain NCTC 13174 / 8081)).